The primary structure comprises 328 residues: Glyoxylate reductase/hydroxypyruvate reductase (328 aa).

Residue S36 is modified to Phosphoserine. A substrate-binding site is contributed by 83–84 (VG). NADP(+) is bound by residues 162–164 (GRI), 185–188 (RQPR), S217, and I243. Positions 245 and 269 each coordinate substrate. Position 272 is a phosphoserine (S272). H293 acts as the Proton donor in catalysis. 293 to 296 (HIGS) contacts substrate. Position 295 (G295) interacts with NADP(+). The residue at position 298 (T298) is a Phosphothreonine.

Belongs to the D-isomer specific 2-hydroxyacid dehydrogenase family. In terms of assembly, homodimer. As to expression, ubiquitous. Most abundantly expressed in the liver.

The catalysed reaction is glycolate + NADP(+) = glyoxylate + NADPH + H(+). The enzyme catalyses (R)-glycerate + NAD(+) = 3-hydroxypyruvate + NADH + H(+). It carries out the reaction (R)-glycerate + NADP(+) = 3-hydroxypyruvate + NADPH + H(+). Its function is as follows. Enzyme with hydroxy-pyruvate reductase, glyoxylate reductase and D-glycerate dehydrogenase enzymatic activities. Reduces hydroxypyruvate to D-glycerate, glyoxylate to glycolate, oxidizes D-glycerate to hydroxypyruvate. The sequence is that of Glyoxylate reductase/hydroxypyruvate reductase (GRHPR) from Homo sapiens (Human).